The primary structure comprises 332 residues: Cysteine and histidine-rich domain-containing protein 1 (332 aa).

Ala2 carries the post-translational modification N-acetylalanine. Residues 2 to 77 (ALLCYNRGCG…KPPESVKPEV (76 aa)) form an interaction with PPP5C region. Positions 5, 10, 24, 27, 42, and 43 each coordinate Zn(2+). CHORD domains lie at 5-64 (CYNR…KGRH) and 157-216 (CKNG…KGKH). Thr47 carries the post-translational modification Phosphothreonine. At Ser51 the chain carries Phosphoserine. Zn(2+) contacts are provided by Cys59, His64, Cys157, Cys162, Cys176, His179, Cys194, Cys195, Cys211, and His216. The tract at residues 62-81 (GRHNSEKPPESVKPEVKTTE) is disordered. Positions 64–81 (HNSEKPPESVKPEVKTTE) are enriched in basic and acidic residues. Positions 65–316 (NSEKPPESVK…AEPMQWASLE (252 aa)) are interaction with HSP90AA1 and HSP90AB1. The CS domain maps to 227–316 (VVPCRHDWHQ…AEPMQWASLE (90 aa)).

Interacts with HSP90AA1, HSP90AB1, PPP5C, ROCK1 and ROCK2.

In terms of biological role, regulates centrosome duplication, probably by inhibiting the kinase activity of ROCK2. Proposed to act as co-chaperone for HSP90. May play a role in the regulation of NOD1 via a HSP90 chaperone complex. In vitro, has intrinsic chaperone activity. This function may be achieved by inhibiting association of ROCK2 with NPM1. Plays a role in ensuring the localization of the tyrosine kinase receptor EGFR to the plasma membrane, and thus ensures the subsequent regulation of EGFR activity and EGF-induced actin cytoskeleton remodeling. Involved in stress response. Prevents tumorigenesis. This is Cysteine and histidine-rich domain-containing protein 1 (CHORDC1) from Pongo abelii (Sumatran orangutan).